Reading from the N-terminus, the 494-residue chain is Ketol-acid reductoisomerase (NADP(+)) (494 aa).

The region spanning 14 to 208 (LDQIGRCRFM…GGDRAGVLES (195 aa)) is the KARI N-terminal Rossmann domain. NADP(+) is bound by residues 45-48 (CGAQ), Arg68, Arg76, Ser78, and 108-110 (DKQ). Residue His132 is part of the active site. Residue Gly158 coordinates NADP(+). KARI C-terminal knotted domains lie at 209–344 (SFVA…NAPE) and 345–487 (YNGK…MTDM). Positions 217, 221, 389, and 393 each coordinate Mg(2+). A substrate-binding site is contributed by Ser414.

The protein belongs to the ketol-acid reductoisomerase family. The cofactor is Mg(2+).

The enzyme catalyses (2R)-2,3-dihydroxy-3-methylbutanoate + NADP(+) = (2S)-2-acetolactate + NADPH + H(+). It catalyses the reaction (2R,3R)-2,3-dihydroxy-3-methylpentanoate + NADP(+) = (S)-2-ethyl-2-hydroxy-3-oxobutanoate + NADPH + H(+). The protein operates within amino-acid biosynthesis; L-isoleucine biosynthesis; L-isoleucine from 2-oxobutanoate: step 2/4. Its pathway is amino-acid biosynthesis; L-valine biosynthesis; L-valine from pyruvate: step 2/4. Its function is as follows. Involved in the biosynthesis of branched-chain amino acids (BCAA). Catalyzes an alkyl-migration followed by a ketol-acid reduction of (S)-2-acetolactate (S2AL) to yield (R)-2,3-dihydroxy-isovalerate. In the isomerase reaction, S2AL is rearranged via a Mg-dependent methyl migration to produce 3-hydroxy-3-methyl-2-ketobutyrate (HMKB). In the reductase reaction, this 2-ketoacid undergoes a metal-dependent reduction by NADPH to yield (R)-2,3-dihydroxy-isovalerate. The chain is Ketol-acid reductoisomerase (NADP(+)) from Pseudoalteromonas atlantica (strain T6c / ATCC BAA-1087).